Reading from the N-terminus, the 551-residue chain is Formate--tetrahydrofolate ligase (551 aa).

Residue 65–72 (TPAGEGKT) participates in ATP binding.

The protein belongs to the formate--tetrahydrofolate ligase family.

It catalyses the reaction (6S)-5,6,7,8-tetrahydrofolate + formate + ATP = (6R)-10-formyltetrahydrofolate + ADP + phosphate. The protein operates within one-carbon metabolism; tetrahydrofolate interconversion. This chain is Formate--tetrahydrofolate ligase, found in Thermosipho africanus (strain TCF52B).